Reading from the N-terminus, the 27-residue chain is Caerulein precursor fragment R2 (27 aa).

As to expression, expressed by the skin glands.

Its subcellular location is the secreted. In terms of biological role, antimicrobial peptide. The chain is Caerulein precursor fragment R2 from Xenopus ruwenzoriensis (Uganda clawed frog).